The sequence spans 405 residues: Acetyl-CoA decarbonylase/synthase complex subunit delta (405 aa).

This sequence belongs to the CdhD family. Heterodimer of delta and gamma chains. The ACDS complex is made up of alpha, epsilon, beta, gamma and delta chains with a probable stoichiometry of (alpha(2)epsilon(2))(4)-beta(8)-(gamma(1)delta(1))(8).

Part of a complex that catalyzes the reversible cleavage of acetyl-CoA, allowing autotrophic growth from CO(2). Probably maintains the overall quaternary structure of the ACDS complex. The sequence is that of Acetyl-CoA decarbonylase/synthase complex subunit delta from Methanocaldococcus jannaschii (strain ATCC 43067 / DSM 2661 / JAL-1 / JCM 10045 / NBRC 100440) (Methanococcus jannaschii).